The primary structure comprises 293 residues: Ribosomal protein L11 methyltransferase (293 aa).

The S-adenosyl-L-methionine site is built by Thr-145, Gly-166, Asp-188, and Asn-230.

Belongs to the methyltransferase superfamily. PrmA family.

The protein localises to the cytoplasm. The enzyme catalyses L-lysyl-[protein] + 3 S-adenosyl-L-methionine = N(6),N(6),N(6)-trimethyl-L-lysyl-[protein] + 3 S-adenosyl-L-homocysteine + 3 H(+). Methylates ribosomal protein L11. This chain is Ribosomal protein L11 methyltransferase, found in Sodalis glossinidius (strain morsitans).